A 60-amino-acid chain; its full sequence is Ixodegrin YY-39 (60 aa).

The first 21 residues, 1-21 (MNAALIAALLILGALTLDATA), serve as a signal peptide directing secretion. A Cell attachment site motif is present at residues 49 to 51 (RGD).

Belongs to the ixodegrin family. Post-translationally, contains 3 disulfide bonds. Expressed in salivary glands.

Its subcellular location is the secreted. Its function is as follows. Tick salivary platelet aggregation inhibitor that plays an important part in the anti-hemostatic strategy of ticks. Inhibits platelet aggregation induced by ADP, thrombin and thromboxane A2 (TXA2). Blocks platelet adhesion to soluble collagen (most probably through the binding to alpha-2/beta-1 integrin (ITGA2/ITGB1)) and binds to purified glycoprotein IIb/IIIa (ITGA2B/ITGB3) in a dose-dependent manner. In vivo, reduces thrombus weight effectively in a rat arteriovenous shunt model and inhibits thrombosis in a carrageenan-induced mouse tail thrombosis model. In Ixodes scapularis (Black-legged tick), this protein is Ixodegrin YY-39.